Consider the following 261-residue polypeptide: Hydroxyethylthiazole kinase (261 aa).

Met-45 serves as a coordination point for substrate. ATP is bound by residues Arg-121 and Ser-167. Position 194 (Gly-194) interacts with substrate.

This sequence belongs to the Thz kinase family. Requires Mg(2+) as cofactor.

The catalysed reaction is 5-(2-hydroxyethyl)-4-methylthiazole + ATP = 4-methyl-5-(2-phosphooxyethyl)-thiazole + ADP + H(+). It participates in cofactor biosynthesis; thiamine diphosphate biosynthesis; 4-methyl-5-(2-phosphoethyl)-thiazole from 5-(2-hydroxyethyl)-4-methylthiazole: step 1/1. In terms of biological role, catalyzes the phosphorylation of the hydroxyl group of 4-methyl-5-beta-hydroxyethylthiazole (THZ). The protein is Hydroxyethylthiazole kinase of Vibrio atlanticus (strain LGP32) (Vibrio splendidus (strain Mel32)).